The sequence spans 90 residues: Bombyxin B-6 (90 aa).

Residues 1-20 form the signal peptide; sequence MMKTSVMFMLVVVISLMCSS. Disulfide bonds link cysteine 30–cysteine 76, cysteine 42–cysteine 89, and cysteine 75–cysteine 80. Positions 49-67 are cleaved as a propeptide — c peptide like; sequence GVAQYAPYFWTRQYLGSRG.

It belongs to the insulin family. As to quaternary structure, heterodimer of a B chain and an A chain linked by two disulfide bonds.

It localises to the secreted. Brain peptide responsible for activation of prothoracic glands to produce ecdysone in insects. The protein is Bombyxin B-6 (BBXB6) of Bombyx mori (Silk moth).